Here is a 1026-residue protein sequence, read N- to C-terminus: P3N-PIPO polyprotein (1026 aa).

The 144-residue stretch at 165–308 (RMSEASLQLF…KEQSNEIVHY (144 aa)) folds into the Peptidase S30 domain. Active-site for P1 proteinase activity residues include His216, Asp225, and Ser259. Positions 360-363 (KITC) match the Involved in interaction with stylet and aphid transmission motif. An Involved in virions binding and aphid transmission motif is present at residues 618 to 620 (PTK). The Peptidase C6 domain occupies 644 to 766 (MFIAKAGYCY…DSSMKTYLVG (123 aa)). Catalysis depends on for helper component proteinase activity residues Cys652 and His725.

It belongs to the potyviridae P3N-PIPO polyprotein family. Interacts (via PIPO domain) with host PCaP1 protein; this interaction may help to anchor the movement complex to the plasma membrane from which the complex could move to the plasmodesmata. Post-translationally, potyviral RNA is expressed as two polyproteins which undergo post-translational proteolytic processing. Genome polyprotein is processed by NIa-pro, P1 and HC-pro proteinases resulting in the production of at least ten individual proteins. P3N-PIPO is cleaved by P1 and HC-pro proteinases resulting in the production of three individual proteins. The P1 proteinase and the HC-pro cleave only their respective C-termini autocatalytically.

It is found in the host cell junction. It localises to the host plasmodesma. It carries out the reaction Hydrolyzes a Gly-|-Gly bond at its own C-terminus, commonly in the sequence -Tyr-Xaa-Val-Gly-|-Gly, in the processing of the potyviral polyprotein.. In terms of biological role, required for aphid transmission and also has proteolytic activity. Only cleaves a Gly-Gly dipeptide at its own C-terminus. Interacts with virions and aphid stylets. Acts as a suppressor of RNA-mediated gene silencing, also known as post-transcriptional gene silencing (PTGS), a mechanism of plant viral defense that limits the accumulation of viral RNAs. May have RNA-binding activity. Its function is as follows. Allows efficient cell to cell propagation, by bypassing the host cell wall barrier. Transports viral genome to neighboring plant cells directly through plasmosdesmata, without any budding. This Prunus armeniaca (Apricot) protein is P3N-PIPO polyprotein.